Consider the following 365-residue polypeptide: tRNA/tmRNA (uracil-C(5))-methyltransferase (365 aa).

5 residues coordinate S-adenosyl-L-methionine: glutamine 189, tyrosine 217, asparagine 222, glutamate 238, and aspartate 298. Residue cysteine 323 is the Nucleophile of the active site. The Proton acceptor role is filled by glutamate 357.

This sequence belongs to the class I-like SAM-binding methyltransferase superfamily. RNA M5U methyltransferase family. TrmA subfamily.

It catalyses the reaction uridine(54) in tRNA + S-adenosyl-L-methionine = 5-methyluridine(54) in tRNA + S-adenosyl-L-homocysteine + H(+). The enzyme catalyses uridine(341) in tmRNA + S-adenosyl-L-methionine = 5-methyluridine(341) in tmRNA + S-adenosyl-L-homocysteine + H(+). In terms of biological role, dual-specificity methyltransferase that catalyzes the formation of 5-methyluridine at position 54 (m5U54) in all tRNAs, and that of position 341 (m5U341) in tmRNA (transfer-mRNA). This Shewanella denitrificans (strain OS217 / ATCC BAA-1090 / DSM 15013) protein is tRNA/tmRNA (uracil-C(5))-methyltransferase.